An 888-amino-acid chain; its full sequence is MSTKGLKEEIDDVPSVDPVVSETVNSALEQLQLDDPEENATSNAFANKVSQDSQFANGPPSQMFPHPQMMGGMGFMPYSQMMQVPHNPCPFFPPPDFNDPTAPLSSSPLNAGGPPMLFKNDSLPFQMLSSGAAVATQGGQNLNPLINDNSMKVLPIASADPLWTHSNVPGSASVAIEETTATLQESLPSKGRESNNKASSFRRQTFHALSPTDLINAANNVTLSKDFQSDMQNFSKAKKPSVGANNTAKTRTQSISFDNTPSSTSFIPPTNSVSEKLSDFKIETSKEDLINKTAPAKKESPTTYGAAYPYGGPLLQPNPIMPGHPHNISSPIYGIRSPFPNSYEMGAQFQPFSPILNPTSHSLNANSPIPLTQSPIHLAPVLNPSSNSVAFSDMKNDGGKPTTDNDKAGPNVRMDLINPNLGPSMQPFHILPPQQNTPPPPWLYSTPPPFNAMVPPHLLAQNHMPLMNSANNKHHGRNNNSMSSHNDNDNIGNSNYNNKDTGRSNVGKMKNMKNSYHGYYNNNNNNNNNNNNNNNSNATNSNSAEKQRKIEESSRFADAVLDQYIGSIHSLCKDQHGCRFLQKQLDILGSKAADAIFEETKDYTVELMTDSFGNYLIQKLLEEVTTEQRIVLTKISSPHFVEISLNPHGTRALQKLIECIKTDEEAQIVVDSLRPYTVQLSKDLNGNHVIQKCLQRLKPENFQFIFDAISDSCIDIATHRHGCCVLQRCLDHGTTEQCDNLCDKLLALVDKLTLDPFGNYVVQYIITKEAEKNKYDYTHKIVHLLKPRAIELSIHKFGSNVIEKILKTAIVSEPMILEILNNGGETGIQSLLNDSYGNYVLQTALDISHKQNDYLYKRLSEIVAPLLVGPIRNTPHGKRIIGMLHLDS.

Residues T205, T212, and T252 each carry the phosphothreonine modification. Disordered stretches follow at residues 236–270 (KAKK…IPPT) and 467–551 (MNSA…RKIE). Positions 243–270 (GANNTAKTRTQSISFDNTPSSTSFIPPT) are enriched in polar residues. At S256 the chain carries Phosphoserine. 2 stretches are compositionally biased toward low complexity: residues 478–499 (NNNS…YNNK) and 521–543 (NNNN…NSNS). Residues 539–888 (TNSNSAEKQR…RIIGMLHLDS (350 aa)) form the PUM-HD domain. Pumilio repeat units lie at residues 563 to 598 (QYIG…AIFE), 599 to 634 (ETKD…VLTK), 635 to 671 (ISSP…IVVD), 672 to 707 (SLRP…FIFD), 708 to 743 (AISD…NLCD), 744 to 783 (KLLA…KIVH), 784 to 821 (LLKP…EILN), and 823 to 861 (GGET…RLSE).

Functionally, is not essential for haploid growth, but may affect diploid formation. The polypeptide is Pumilio homology domain family member 4 (PUF4) (Saccharomyces cerevisiae (strain ATCC 204508 / S288c) (Baker's yeast)).